Here is a 927-residue protein sequence, read N- to C-terminus: Perchlorate reductase subunit alpha (927 aa).

Residues 1–31 (MVQMTRRGFLLASGATLLGSSLSFRTLAAAA) constitute a signal peptide (tat-type signal). One can recognise a 4Fe-4S Mo/W bis-MGD-type domain in the interval 53-116 (DKKTRGAHLI…CAHDYMYGPH (64 aa)). [4Fe-4S] cluster contacts are provided by His-60, Cys-64, Cys-68, and Cys-102. Position 198 (Asp-198) interacts with Mo-bis(molybdopterin guanine dinucleotide).

This sequence belongs to the prokaryotic molybdopterin-containing oxidoreductase family. As to quaternary structure, heterotrimer of alpha, beta and gamma subunits. [4Fe-4S] cluster is required as a cofactor. The cofactor is Mo-bis(molybdopterin guanine dinucleotide). Post-translationally, predicted to be exported by the Tat system. The position of the signal peptide cleavage has not been experimentally proven.

It localises to the periplasm. In terms of biological role, component of the perchlorate reductase that catalyzes the reduction of perchlorate to chlorite and allows anaerobic growth on perchlorate as the sole electron acceptor. Is probably also able to reduce chlorate to chlorite. The alpha subunit is likely the catalytic subunit. This is Perchlorate reductase subunit alpha (pcrA) from Dechloromonas aromatica (strain RCB).